The primary structure comprises 202 residues: Translation initiation factor IF-3 (202 aa).

Residues 172–202 form a disordered region; sequence KTRASARHPEVPGAGSVQDIDATGDTDGSPH.

This sequence belongs to the IF-3 family. As to quaternary structure, monomer.

The protein resides in the cytoplasm. Functionally, IF-3 binds to the 30S ribosomal subunit and shifts the equilibrium between 70S ribosomes and their 50S and 30S subunits in favor of the free subunits, thus enhancing the availability of 30S subunits on which protein synthesis initiation begins. The sequence is that of Translation initiation factor IF-3 from Mycobacterium leprae (strain TN).